We begin with the raw amino-acid sequence, 109 residues long: Somatostatin-2 (109 aa).

The N-terminal stretch at 1–16 is a signal peptide; it reads MQFLASLVSFLLVVWS. Residues 17 to 80 constitute a propeptide that is removed on maturation; it reads VKATALPVED…EPLENKLEER (64 aa). Cysteines 98 and 109 form a disulfide.

This sequence belongs to the somatostatin family.

It is found in the secreted. Functionally, somatostatin inhibits the release of somatotropin. The chain is Somatostatin-2 (sst2) from Protopterus annectens (African lungfish).